The primary structure comprises 370 residues: Selenide, water dikinase 2 (370 aa).

Selenocysteine 24 is an active-site residue. Residue selenocysteine 24 is a non-standard amino acid, selenocysteine. ATP contacts are provided by residues lysine 27, 55–57 (GMD), aspartate 76, and aspartate 99. Aspartate 57 contributes to the Mg(2+) binding site. The Mg(2+) site is built by aspartate 99 and aspartate 258.

It belongs to the selenophosphate synthase 1 family. Class I subfamily. In terms of assembly, homodimer. Requires Mg(2+) as cofactor. First expressed in the midgut anlagen with subsequent expression in a variety of tissues including the gut and nervous system.

It carries out the reaction hydrogenselenide + ATP + H2O = selenophosphate + AMP + phosphate + 2 H(+). Functionally, synthesizes selenophosphate from selenide and ATP. The chain is Selenide, water dikinase 2 (Sps2) from Drosophila melanogaster (Fruit fly).